Here is a 231-residue protein sequence, read N- to C-terminus: 2,3-bisphosphoglycerate-dependent phosphoglycerate mutase (231 aa).

Substrate-binding positions include 8–15, 21–22, Arg60, 87–90, Lys98, 114–115, and 183–184; these read RHGESEWN, TG, ERHY, RR, and GN. The active-site Tele-phosphohistidine intermediate is the His9. The active-site Proton donor/acceptor is the Glu87.

This sequence belongs to the phosphoglycerate mutase family. BPG-dependent PGAM subfamily.

The catalysed reaction is (2R)-2-phosphoglycerate = (2R)-3-phosphoglycerate. The protein operates within carbohydrate degradation; glycolysis; pyruvate from D-glyceraldehyde 3-phosphate: step 3/5. Catalyzes the interconversion of 2-phosphoglycerate and 3-phosphoglycerate. The chain is 2,3-bisphosphoglycerate-dependent phosphoglycerate mutase from Streptococcus equi subsp. zooepidemicus (strain H70).